Consider the following 551-residue polypeptide: Protein GZF3 (551 aa).

The tract at residues 17 to 43 (DNVFEPKSSENLNSLNQSEEEGHIGRW) is disordered. The GATA-type zinc finger occupies 131-155 (CKNCLTSTTPLWRRDEHGAMLCNAC). Disordered regions lie at residues 212 to 260 (GRKA…SATK), 379 to 400 (LAPTSSRTTDSNPSEVPNQIRS), and 467 to 490 (SISNSVSSSDVSGRKFENHPAKDL). Polar residues predominate over residues 228-239 (SQLLMGTSSTAK). The segment covering 244–254 (PKTESKERSDS) has biased composition (basic and acidic residues). Residues 388 to 400 (DSNPSEVPNQIRS) show a composition bias toward polar residues. Over residues 467 to 477 (SISNSVSSSDV) the composition is skewed to low complexity. Basic and acidic residues predominate over residues 478-490 (SGRKFENHPAKDL).

It is found in the nucleus. The chain is Protein GZF3 (GZF3) from Saccharomyces cerevisiae (strain ATCC 204508 / S288c) (Baker's yeast).